Here is a 153-residue protein sequence, read N- to C-terminus: Carbohydrate-binding protein AWN (153 aa).

The first 20 residues, 1-20 (MKLAAPSLALLLSTATLVSG), serve as a signal peptide directing secretion. At A21 the chain carries N-acetylalanine. Cystine bridges form between C29–C50 and C73–C94. In terms of domain architecture, CUB spans 29–130 (CGGVLRDPPG…SPFHIYYYAD (102 aa)). A heparin-binding region spans residues 93 to 130 (ICGGISLVFRSSSNIATIKYLRTSGQRASPFHIYYYAD).

The protein belongs to the spermadhesin family. Post-translationally, partial N-acetylation differentiates isoforms AWN-1 (not acetylated) and AWN-2 (acetylated).

It localises to the secreted. Functionally, AWN proteins mediate the binding of boar spermatozoa to component(s) of the egg's zona pellucida by a carbohydrate-binding mechanism. Awn proteins are secretory components of the male accessory glands being coated to the sperm surface at the time of ejaculation. They possess as well heparin-, serine-protease-inhibitor-binding capability. This is Carbohydrate-binding protein AWN from Sus scrofa (Pig).